Consider the following 642-residue polypeptide: Chaperone protein DnaK (642 aa).

Threonine 198 carries the phosphothreonine; by autocatalysis modification. A disordered region spans residues 602–642; it reads AYAKMTEKQQSDDGAGTQNADHKEDDVVDADFEEVKSDKKD.

The protein belongs to the heat shock protein 70 family.

Acts as a chaperone. This Dichelobacter nodosus (strain VCS1703A) protein is Chaperone protein DnaK.